The primary structure comprises 491 residues: Cytochrome P450 2H2 (491 aa).

Cys436 lines the heme pocket.

The protein belongs to the cytochrome P450 family. Requires heme as cofactor.

It is found in the endoplasmic reticulum membrane. Its subcellular location is the microsome membrane. The catalysed reaction is an organic molecule + reduced [NADPH--hemoprotein reductase] + O2 = an alcohol + oxidized [NADPH--hemoprotein reductase] + H2O + H(+). In terms of biological role, cytochromes P450 are a group of heme-thiolate monooxygenases. In liver microsomes, this enzyme is involved in an NADPH-dependent electron transport pathway. It oxidizes a variety of structurally unrelated compounds, including steroids, fatty acids, and xenobiotics. The protein is Cytochrome P450 2H2 (CYP2H2) of Gallus gallus (Chicken).